The sequence spans 454 residues: Asparagine--tRNA ligase (454 aa).

This sequence belongs to the class-II aminoacyl-tRNA synthetase family. In terms of assembly, homodimer.

It localises to the cytoplasm. It catalyses the reaction tRNA(Asn) + L-asparagine + ATP = L-asparaginyl-tRNA(Asn) + AMP + diphosphate + H(+). The chain is Asparagine--tRNA ligase from Mesoplasma florum (strain ATCC 33453 / NBRC 100688 / NCTC 11704 / L1) (Acholeplasma florum).